The primary structure comprises 189 residues: Large ribosomal subunit protein bL9 (189 aa).

It belongs to the bacterial ribosomal protein bL9 family.

Functionally, binds to the 23S rRNA. The sequence is that of Large ribosomal subunit protein bL9 from Beijerinckia indica subsp. indica (strain ATCC 9039 / DSM 1715 / NCIMB 8712).